A 108-amino-acid chain; its full sequence is UPF0060 membrane protein YnfA (108 aa).

Over 1-5 (MLKTT) the chain is Periplasmic. The chain crosses the membrane as a helical span at residues 6–26 (LLFFVTALCEIIGCFLPWLWL). Residues 27–30 (KRGA) are Cytoplasmic-facing. The chain crosses the membrane as a helical span at residues 31 to 51 (SMWWLLPAAASLALFVWLLTL). Residues 52–60 (HPAASGRVY) are Periplasmic-facing. The helical transmembrane segment at 61–81 (AAYGGVYVCTALLWLRVVDGV) threads the bilayer. Topologically, residues 82 to 84 (RLT) are cytoplasmic. The helical transmembrane segment at 85–105 (VYDWCGALIALCGMLIIVVGW) threads the bilayer. Residues 106 to 108 (GRT) lie on the Periplasmic side of the membrane.

The protein belongs to the UPF0060 family.

The protein resides in the cell inner membrane. The sequence is that of UPF0060 membrane protein YnfA from Salmonella schwarzengrund (strain CVM19633).